The following is a 777-amino-acid chain: Androgen receptor (777 aa).

Residues 1-416 (MEVHIGLGGV…IDYYFPPQKP (416 aa)) form a modulating region. Disordered regions lie at residues 53-95 (CVHP…QAPQ), 110-132 (GEQG…YPES), and 205-241 (RRAG…LSEP). 2 consecutive NR C4-type zinc fingers follow at residues 417–434 (CLSC…ALTC) and 453–472 (CASR…CPSC). The segment at residues 417 to 489 (CLSCEDEASG…AGMTLGARKL (73 aa)) is a DNA-binding region (nuclear receptor). In terms of domain architecture, NR LBD spans 526–757 (SCQPIFLNVL…DFPEMMSEII (232 aa)). Positions 563, 610, and 735 each coordinate 17beta-hydroxy-5alpha-androstan-3-one.

Belongs to the nuclear hormone receptor family. NR3 subfamily. Binds DNA as a homodimer. Interacts via the ligand-binding domain with LXXLL and FXXLF motifs from coactivator proteins. Interacts (via ligand-binding domain) with TRIM68. As to expression, detected in somatic Leydig and Sertoli cells in testis with high level expression. Also detected at lower expression levels in forebrain and heart.

The protein resides in the nucleus. Its subcellular location is the cytoplasm. Steroid hormone receptors are ligand-activated transcription factors that regulate eukaryotic gene expression and affect cellular proliferation and differentiation in target tissues. Transcription factor activity is modulated by bound coactivator and corepressor proteins. The protein is Androgen receptor (ar) of Aquarana catesbeiana (American bullfrog).